Consider the following 476-residue polypeptide: Thyroid receptor-interacting protein 6 (476 aa).

Over residues 1 to 12 the composition is skewed to pro residues; the sequence is MSGPTWLPPKQP. Disordered regions lie at residues 1–93 and 108–253; these read MSGP…PGSL and NGGR…QPPE. Arg-25 is modified (asymmetric dimethylarginine; alternate). Arg-25 bears the Omega-N-methylarginine; alternate mark. Tyr-55 is modified (phosphotyrosine; by SRC). Position 92 is a phosphoserine (Ser-92). Arg-111 is subject to Omega-N-methylarginine. Ser-142 is subject to Phosphoserine. Low complexity predominate over residues 152–167; sequence PTPASYTTASTPAGPA. 2 positions are modified to omega-N-methylarginine: Arg-179 and Arg-186. A Phosphoserine modification is found at Ser-189. 3 positions are modified to omega-N-methylarginine: Arg-205, Arg-236, and Arg-238. The residue at position 249 (Ser-249) is a Phosphoserine. 3 consecutive LIM zinc-binding domains span residues 279 to 316, 339 to 398, and 399 to 467; these read CGGC…QLRG, CATC…FAPR, and CSVC…RIQE. Residues 469–476 are interaction with MAGI1 and PTPN13; that stretch reads SATVTTDC.

This sequence belongs to the zyxin/ajuba family. In terms of assembly, specifically interacts with the ligand binding domain of the thyroid receptor (TR) in the presence of thyroid hormone. Interacts (via the third LIM domain and C-terminus) with PTPN13 (via the second PDZ domain). Interacts (via the second LIM domain or via the third LIM domain plus C-terminus) with PDLIM4 (via PDZ domain). Found in a complex with PTPN13 and PDLIM4. Interacts with SVIL isoform 2. Interacts with LPAR2 but not other LPA receptors. Interacts with PRKAA2. Interacts with MAGI1. Interacts with SCRIB. In case of infection, interacts with S.typhimurium protein sseI. Post-translationally, phosphorylation at Tyr-55 by SRC is required for enhancement of lysophosphatidic acid-induced cell migration. Tyr-55 is dephosphorylated by PTPN13. As to expression, abundantly expressed in kidney, liver and lung. Lower levels in heart, placenta and pancreas. Expressed in colonic epithelial cells. Up-regulated in colonic tumors.

Its subcellular location is the cytoplasm. The protein resides in the cytoskeleton. It is found in the cell junction. It localises to the focal adhesion. The protein localises to the nucleus. Its function is as follows. Relays signals from the cell surface to the nucleus to weaken adherens junction and promote actin cytoskeleton reorganization and cell invasiveness. Involved in lysophosphatidic acid-induced cell adhesion and migration. Acts as a transcriptional coactivator for NF-kappa-B and JUN, and mediates the transrepression of these transcription factors induced by glucocorticoid receptor. This is Thyroid receptor-interacting protein 6 (TRIP6) from Homo sapiens (Human).